We begin with the raw amino-acid sequence, 495 residues long: Histidine--tRNA ligase (495 aa).

Polar residues predominate over residues 1–10 (MTTDSEQPNT). The disordered stretch occupies residues 1 to 24 (MTTDSEQPNTDFRPEARAPRGFAD). Positions 12-24 (FRPEARAPRGFAD) are enriched in basic and acidic residues.

This sequence belongs to the class-II aminoacyl-tRNA synthetase family. As to quaternary structure, homodimer.

Its subcellular location is the cytoplasm. The catalysed reaction is tRNA(His) + L-histidine + ATP = L-histidyl-tRNA(His) + AMP + diphosphate + H(+). The protein is Histidine--tRNA ligase (hisS) of Caulobacter vibrioides (strain ATCC 19089 / CIP 103742 / CB 15) (Caulobacter crescentus).